Here is a 208-residue protein sequence, read N- to C-terminus: MADLSAQDKLKQICDTLREETLKPAEEEAGSIVHNAREQAKRIVEEAKEEAQRIIRSAEETASQTLKKGEAALVQAGKRSLENLKQAVETKIFKESLVEWLDGVTTDPGVSAKFVQALVQTVETQGISGNLSACIGKHVSARAVNEALGKEITSKLKDKGVVIGKFSGGAQLKVEERNWVLDISSEALLDLLTRFLQKDFREMIFQSC.

Belongs to the V-ATPase E subunit family.

Its function is as follows. Produces ATP from ADP in the presence of a proton gradient across the membrane. In Chlamydia muridarum (strain MoPn / Nigg), this protein is V-type ATP synthase subunit E (atpE).